The following is a 314-amino-acid chain: Ferredoxin:CoB-CoM heterodisulfide reductase subunit B (314 aa).

It belongs to the HdrB family. As to quaternary structure, the ferredoxin:CoB-CoM heterodisulfide reductase is composed of three subunits; HdrA1, HdrB1 and HdrC1. Requires [4Fe-4S] cluster as cofactor.

It is found in the cytoplasm. It catalyses the reaction coenzyme B + coenzyme M + 2 oxidized [2Fe-2S]-[ferredoxin] = coenzyme M-coenzyme B heterodisulfide + 2 reduced [2Fe-2S]-[ferredoxin] + 2 H(+). Its pathway is cofactor metabolism; coenzyme M-coenzyme B heterodisulfide reduction; coenzyme B and coenzyme M from coenzyme M-coenzyme B heterodisulfide: step 1/1. In terms of biological role, part of a complex that catalyzes the reversible reduction of CoM-S-S-CoB to the thiol-coenzymes H-S-CoM (coenzyme M) and H-S-CoB (coenzyme B). Probably involved in methylotrophic methanogenesis but not in aceticlastic methanogenesis. This Methanosarcina acetivorans (strain ATCC 35395 / DSM 2834 / JCM 12185 / C2A) protein is Ferredoxin:CoB-CoM heterodisulfide reductase subunit B.